Reading from the N-terminus, the 104-residue chain is UPF0145 protein Hlac_1015 (104 aa).

This sequence belongs to the UPF0145 family.

The polypeptide is UPF0145 protein Hlac_1015 (Halorubrum lacusprofundi (strain ATCC 49239 / DSM 5036 / JCM 8891 / ACAM 34)).